The following is a 133-amino-acid chain: Probable mitochondrial pyruvate carrier 2 (133 aa).

3 helical membrane-spanning segments follow: residues 40–57 (VFFW…AGLA), 73–91 (ALFA…ITPI), and 100–116 (FFVM…IAHY).

The protein belongs to the mitochondrial pyruvate carrier (MPC) (TC 2.A.105) family.

It is found in the mitochondrion inner membrane. In terms of biological role, may mediate the uptake of pyruvate into mitochondria. The protein is Probable mitochondrial pyruvate carrier 2 of Caenorhabditis elegans.